Consider the following 340-residue polypeptide: MAVTMYYEDDVEVSALAGKQIAVIGYGSQGHAHAQNLRDSGHNVIIGVRHGKSFDKAKEDGFETFEVGEAVAKADVIMVLAPDELQQSIYEEDIKPNLKAGSALGFAHGFNIHFGYIKVPEDVDVFMVAPKAPGHLVRRTYTEGFGTPALFVSHQNASGHAREIAMDWAKGIGCARVGIIETTFKEETEEDLFGEQAVLCGGLTALVEAGFETLTEAGYAGELAYFEVLHEMKLIVDLMYEGGFTKMRQSISNTAEFGDYVTGPRIITDAVKKNMKLVLADIQSGKFAQDFVDDFKAGRPKLTAYREAAKNLEIEKIGAELRKAMPFTQSGDDDAFKIYQ.

Residues valine 3 to threonine 182 enclose the KARI N-terminal Rossmann domain. NADP(+)-binding positions include tyrosine 26–glutamine 29, arginine 49, serine 53, and aspartate 83–glutamine 86. The active site involves histidine 108. Glycine 134 is a binding site for NADP(+). Residues threonine 183–threonine 328 form the KARI C-terminal knotted domain. Aspartate 191, glutamate 195, glutamate 227, and glutamate 231 together coordinate Mg(2+). A substrate-binding site is contributed by serine 252.

Belongs to the ketol-acid reductoisomerase family. It depends on Mg(2+) as a cofactor.

The enzyme catalyses (2R)-2,3-dihydroxy-3-methylbutanoate + NADP(+) = (2S)-2-acetolactate + NADPH + H(+). It carries out the reaction (2R,3R)-2,3-dihydroxy-3-methylpentanoate + NADP(+) = (S)-2-ethyl-2-hydroxy-3-oxobutanoate + NADPH + H(+). The protein operates within amino-acid biosynthesis; L-isoleucine biosynthesis; L-isoleucine from 2-oxobutanoate: step 2/4. It functions in the pathway amino-acid biosynthesis; L-valine biosynthesis; L-valine from pyruvate: step 2/4. Functionally, involved in the biosynthesis of branched-chain amino acids (BCAA). Catalyzes an alkyl-migration followed by a ketol-acid reduction of (S)-2-acetolactate (S2AL) to yield (R)-2,3-dihydroxy-isovalerate. In the isomerase reaction, S2AL is rearranged via a Mg-dependent methyl migration to produce 3-hydroxy-3-methyl-2-ketobutyrate (HMKB). In the reductase reaction, this 2-ketoacid undergoes a metal-dependent reduction by NADPH to yield (R)-2,3-dihydroxy-isovalerate. The sequence is that of Ketol-acid reductoisomerase (NADP(+)) from Lactococcus lactis subsp. lactis (strain IL1403) (Streptococcus lactis).